The chain runs to 254 residues: Small ribosomal subunit protein uS2 (254 aa).

It belongs to the universal ribosomal protein uS2 family.

In Oceanobacillus iheyensis (strain DSM 14371 / CIP 107618 / JCM 11309 / KCTC 3954 / HTE831), this protein is Small ribosomal subunit protein uS2.